A 251-amino-acid polypeptide reads, in one-letter code: Isoprenyl transferase (251 aa).

Residue aspartate 31 is part of the active site. Aspartate 31 serves as a coordination point for Mg(2+). Residues 32–35, tryptophan 36, arginine 44, histidine 48, and 76–78 contribute to the substrate site; these read GNGR and STE. Asparagine 79 acts as the Proton acceptor in catalysis. Substrate contacts are provided by residues tryptophan 80, arginine 82, arginine 199, and 205–207; that span reads RIS. Residue glutamate 218 coordinates Mg(2+).

It belongs to the UPP synthase family. Homodimer. Mg(2+) serves as cofactor.

Its function is as follows. Catalyzes the condensation of isopentenyl diphosphate (IPP) with allylic pyrophosphates generating different type of terpenoids. This Thermosynechococcus vestitus (strain NIES-2133 / IAM M-273 / BP-1) protein is Isoprenyl transferase.